Consider the following 428-residue polypeptide: D-amino acid dehydrogenase (428 aa).

3–17 (VVILGSGVVGVASAY) serves as a coordination point for FAD.

Belongs to the DadA oxidoreductase family. The cofactor is FAD.

The enzyme catalyses a D-alpha-amino acid + A + H2O = a 2-oxocarboxylate + AH2 + NH4(+). The protein operates within amino-acid degradation; D-alanine degradation; NH(3) and pyruvate from D-alanine: step 1/1. Its function is as follows. Oxidative deamination of D-amino acids. This chain is D-amino acid dehydrogenase, found in Burkholderia cenocepacia (strain ATCC BAA-245 / DSM 16553 / LMG 16656 / NCTC 13227 / J2315 / CF5610) (Burkholderia cepacia (strain J2315)).